The following is a 266-amino-acid chain: Flavin-dependent thymidylate synthase (266 aa).

Positions 11–222 (GFIRLVDYMG…PLACASFERH (212 aa)) constitute a ThyX domain. FAD-binding positions include serine 57, 80 to 82 (RHR), and glutamate 88. DUMP contacts are provided by residues 77 to 80 (QWIR), 88 to 92 (EISGR), and arginine 161. The ThyX motif signature appears at 80–90 (RHRTARLNEIS). FAD contacts are provided by residues 177-179 (DLH) and histidine 183. DUMP is bound at residue arginine 188. Arginine 188 (involved in ionization of N3 of dUMP, leading to its activation) is an active-site residue.

The protein belongs to the thymidylate synthase ThyX family. Homotetramer. FAD is required as a cofactor.

The enzyme catalyses dUMP + (6R)-5,10-methylene-5,6,7,8-tetrahydrofolate + NADPH + H(+) = dTMP + (6S)-5,6,7,8-tetrahydrofolate + NADP(+). Its pathway is pyrimidine metabolism; dTTP biosynthesis. Functionally, catalyzes the reductive methylation of 2'-deoxyuridine-5'-monophosphate (dUMP) to 2'-deoxythymidine-5'-monophosphate (dTMP) while utilizing 5,10-methylenetetrahydrofolate (mTHF) as the methyl donor, and NADPH and FADH(2) as the reductant. The sequence is that of Flavin-dependent thymidylate synthase from Treponema denticola (strain ATCC 35405 / DSM 14222 / CIP 103919 / JCM 8153 / KCTC 15104).